We begin with the raw amino-acid sequence, 637 residues long: tRNA-dihydrouridine(47) synthase [NAD(P)(+)]-like (637 aa).

Disordered regions lie at residues 1–21 (MAET…ACER), 41–63 (LDGD…EPGA), and 85–105 (ERQV…VKPA). A compositionally biased stretch (basic residues) spans 89–104 (PKRARGQNKSRPHVKP). 2 C3H1-type zinc fingers span residues 107 to 137 (YDKD…HDVG) and 145 to 175 (ADLG…HLGP). At Thr-260 the chain carries Phosphothreonine. Phosphoserine occurs at positions 263 and 264. FMN-binding positions include 298 to 300 (PLT) and Gln-352. Cys-383 (proton donor) is an active-site residue. Lys-403 is covalently cross-linked (Glycyl lysine isopeptide (Lys-Gly) (interchain with G-Cter in SUMO2)). FMN is bound by residues Lys-422, His-452, 484–486 (NGD), and 507–508 (AR).

The protein belongs to the Dus family. Dus3 subfamily. The cofactor is FMN.

It carries out the reaction 5,6-dihydrouridine(47) in tRNA + NAD(+) = uridine(47) in tRNA + NADH + H(+). The catalysed reaction is 5,6-dihydrouridine(47) in tRNA + NADP(+) = uridine(47) in tRNA + NADPH + H(+). It catalyses the reaction a 5,6-dihydrouridine in mRNA + NAD(+) = a uridine in mRNA + NADH + H(+). The enzyme catalyses a 5,6-dihydrouridine in mRNA + NADP(+) = a uridine in mRNA + NADPH + H(+). Catalyzes the synthesis of dihydrouridine, a modified base, in various RNAs, such as tRNAs, mRNAs and some long non-coding RNAs (lncRNAs). Mainly modifies the uridine in position 47 (U47) in the D-loop of most cytoplasmic tRNAs. Also able to mediate the formation of dihydrouridine in some mRNAs, thereby regulating their translation. The protein is tRNA-dihydrouridine(47) synthase [NAD(P)(+)]-like of Mus musculus (Mouse).